The following is a 282-amino-acid chain: Ribosomal protein L11 methyltransferase (282 aa).

Positions 133, 154, 175, and 216 each coordinate S-adenosyl-L-methionine.

It belongs to the methyltransferase superfamily. PrmA family.

Its subcellular location is the cytoplasm. The catalysed reaction is L-lysyl-[protein] + 3 S-adenosyl-L-methionine = N(6),N(6),N(6)-trimethyl-L-lysyl-[protein] + 3 S-adenosyl-L-homocysteine + 3 H(+). In terms of biological role, methylates ribosomal protein L11. The protein is Ribosomal protein L11 methyltransferase of Campylobacter jejuni subsp. doylei (strain ATCC BAA-1458 / RM4099 / 269.97).